Consider the following 27-residue polypeptide: CD59 glycoprotein (27 aa).

Intrachain disulfides connect Cys-3/Cys-25 and Cys-6/Cys-12. Asn-17 carries N-linked (GlcNAc...) asparagine glycosylation.

Interacts with T-cell surface antigen CD2. Post-translationally, N- and O-glycosylated. As to expression, expressed in erythrocytes and lymphocytes. Not detected in platelets.

The protein localises to the cell membrane. The protein resides in the secreted. In terms of biological role, potent inhibitor of the complement membrane attack complex (MAC) action, which protects self-cells from damage during complement activation. Acts by binding to the beta-haipins of C8 (C8A and C8B) components of the assembling MAC, forming an intermolecular beta-sheet that prevents incorporation of the multiple copies of C9 required for complete formation of the osmolytic pore. This chain is CD59 glycoprotein, found in Ovis aries (Sheep).